The chain runs to 550 residues: Sterol O-acyltransferase 1 (550 aa).

M1 bears the N-acetylmethionine mark. The interval 1 to 36 (MVGEEKMSLRNRLSKSRENPEEDEDQRKPAKESLEA) is disordered. Residues 1–138 (MVGEEKMSLR…LDELLEVDHI (138 aa)) lie on the Cytoplasmic side of the membrane. Phosphoserine is present on S8. Over residues 15–34 (KSRENPEEDEDQRKPAKESL) the composition is skewed to basic and acidic residues. A cholesterol-binding site is contributed by H137. The helical transmembrane segment at 139–160 (RTIYHMFIALLILFILSTLVVD) threads the bilayer. At 161 to 180 (YIDEGRLVLEFSLLSYAFGK) the chain is on the lumenal side. Residues 181 to 206 (FPTVVWTWWIMFLSTFSVPYFLFQRW) traverse the membrane as a helical segment. Residues 207–218 (ATGYSKSSHPLI) lie on the Cytoplasmic side of the membrane. The chain crosses the membrane as a helical span at residues 219–244 (NSLFHGFLFMVFQIGILGFGPTYVVL). Over 245 to 252 (AYTLPPAS) the chain is Lumenal. Residues 253–276 (RFIIIFEQIRFVMKAHSFVRENVP) traverse the membrane as a helical segment. Residues 277 to 319 (RVLNSAKEKSSTVPIPTVNQYLYFLFAPTLIYRDSYPRNPTVR) lie on the Cytoplasmic side of the membrane. Residues 320 to 352 (WGYVAMQFAQVFGCFFYVYYIFERLCAPLFRNI) traverse the membrane as a helical segment. At 353 to 369 (KQEPFSARVLVLCVFNS) the chain is on the lumenal side. The chain crosses the membrane as a helical span at residues 370 to 395 (ILPGVLILFLTFFAFLHCWLNAFAEM). Topologically, residues 396–443 (LRFGDRMFYKDWWNSTSYSNYYRTWNVVVHDWLYYYAYKDFLWFFSKR) are cytoplasmic. The short motif at 403 to 409 (FYKDWWN) is the FYXDWWN motif element. An acyl-CoA contacts are provided by N415, R418, N421, H425, Y433, K445, and S456. A helical membrane pass occupies residues 444–468 (FKSAAMLAVFAVSAVVHEYALAVCL). H460 is a catalytic residue. Residues 469–474 (SFFYPV) lie on the Lumenal side of the membrane. The helical transmembrane segment at 475–490 (LFVLFMFFGMAFNFIV) threads the bilayer. Over 491–496 (NDSRKK) the chain is Cytoplasmic. A helical transmembrane segment spans residues 497-528 (PIWNVMMWTSLFLGNGVLLCFYSQEWYARQHC). Residues C528 and C546 are joined by a disulfide bond. Over 529–550 (PLKNPTFLDYVRPRSWTCRYVF) the chain is Lumenal.

Belongs to the membrane-bound acyltransferase family. Sterol o-acyltransferase subfamily. May form homo- or heterodimers. Interacts with UBIAD1. Expressed in most tissues, but most strongly in the adrenal gland. Expressed more strongly in liver Kupffer cells than in hepatocytes.

Its subcellular location is the endoplasmic reticulum membrane. It catalyses the reaction a sterol + a long-chain fatty acyl-CoA = a long-chain 3-hydroxysterol ester + CoA. The enzyme catalyses cholesterol + an acyl-CoA = a cholesterol ester + CoA. It carries out the reaction cholesterol + (9Z)-octadecenoyl-CoA = cholesteryl (9Z-octadecenoate) + CoA. The catalysed reaction is cholesterol + hexadecanoyl-CoA = cholesteryl hexadecanoate + CoA. It catalyses the reaction octadecanoyl-CoA + cholesterol = cholesteryl octadecanoate + CoA. The enzyme catalyses (9Z,12Z)-octadecadienoyl-CoA + cholesterol = cholesteryl (9Z,12Z)-octadecadienoate + CoA. It carries out the reaction (5Z,8Z,11Z,14Z)-eicosatetraenoyl-CoA + cholesterol = cholesteryl (5Z,8Z,11Z,14Z)-eicosatetraenoate + CoA. The catalysed reaction is (9Z)-hexadecenoyl-CoA + cholesterol = cholesteryl (9Z)-hexadecenoate + CoA. It catalyses the reaction (11Z)-octadecenoyl-CoA + cholesterol = cholesteryl (11Z)-octadecenoate + CoA. The enzyme catalyses (7Z)-octadecenoyl-CoA + cholesterol = cholesteryl (7Z)-octadecenoate + CoA. Its function is as follows. Catalyzes the formation of fatty acid-cholesterol esters, which are less soluble in membranes than cholesterol. Plays a role in lipoprotein assembly and dietary cholesterol absorption. Preferentially utilizes oleoyl-CoA ((9Z)-octadecenoyl-CoA) as a substrate: shows a higher activity towards an acyl-CoA substrate with a double bond at the delta-9 position (9Z) than towards saturated acyl-CoA or an unsaturated acyl-CoA with a double bond at the delta-7 (7Z) or delta-11 (11Z) positions. This Chlorocebus aethiops (Green monkey) protein is Sterol O-acyltransferase 1 (SOAT1).